The following is a 1370-amino-acid chain: DNA-directed RNA polymerase subunit beta (1370 aa).

This sequence belongs to the RNA polymerase beta chain family. In terms of assembly, the RNAP catalytic core consists of 2 alpha, 1 beta, 1 beta' and 1 omega subunit. When a sigma factor is associated with the core the holoenzyme is formed, which can initiate transcription.

It catalyses the reaction RNA(n) + a ribonucleoside 5'-triphosphate = RNA(n+1) + diphosphate. DNA-dependent RNA polymerase catalyzes the transcription of DNA into RNA using the four ribonucleoside triphosphates as substrates. This chain is DNA-directed RNA polymerase subunit beta, found in Syntrophobacter fumaroxidans (strain DSM 10017 / MPOB).